The primary structure comprises 194 residues: Anaphase-promoting complex subunit CDC26 (194 aa).

The segment at 47 to 194 is disordered; it reads EPMDQSEPPR…PSSNTRSHRH (148 aa). 2 stretches are compositionally biased toward polar residues: residues 79–94 and 102–112; these read GECTRTSIAPTLTSAR and LTLSTPVNPVS. 2 stretches are compositionally biased toward low complexity: residues 154-166 and 174-194; these read DESPTPSDSPESP and TPGNPTSTSGGPSSNTRSHRH.

The protein belongs to the CDC26 family. The APC/C complex is probably composed of at least 12 subunits: apc-2, apc-10, apc-11, cdc-26, emb-1, emb-27, emb-30, mat-1, mat-2, mat-3, such-1 and gfi-3.

Its subcellular location is the nucleus. It participates in protein modification; protein ubiquitination. Its function is as follows. Probable component of the anaphase promoting complex/cyclosome (APC/C), a cell cycle-regulated E3 ubiquitin ligase that controls progression through mitosis and the G1 phase of the cell cycle. The APC/C complex acts by mediating ubiquitination and subsequent degradation of target proteins. Developmental role in early embryogenesis and the metaphase to anaphase transition in meiosis and mitosis. Required for embryonic anterior-posterior axis formation. The sequence is that of Anaphase-promoting complex subunit CDC26 from Caenorhabditis elegans.